Reading from the N-terminus, the 220-residue chain is MKTGIVSAVLALVMPVCVYATTLRLSTDIDLLVLDGKKVSSSLLRGADSIELDNGPHQIVFRIEKNIRLSNHEQRLYISPPLVVSFNTQKISQVNFNLPRLENEQESEAFEAAPRIELLDGDAMPIPVKLDILALTKTPKGTDYEADTERYNKAGKSASLPGFATMMADDSTLLSGVSELDVIPPQSQTLTEQRLKFWFQQADPETRTRFLQWAKQQPSS.

A signal peptide spans 1-20 (MKTGIVSAVLALVMPVCVYA).

Belongs to the UPF0319 family.

In Enterobacter sp. (strain 638), this protein is UPF0319 protein Ent638_1476.